We begin with the raw amino-acid sequence, 211 residues long: Thymidylate kinase (211 aa).

ATP is bound at residue 11-18; sequence GPDGAGKT.

Belongs to the thymidylate kinase family.

The enzyme catalyses dTMP + ATP = dTDP + ADP. Phosphorylation of dTMP to form dTDP in both de novo and salvage pathways of dTTP synthesis. The chain is Thymidylate kinase from Streptococcus equi subsp. zooepidemicus (strain H70).